We begin with the raw amino-acid sequence, 284 residues long: SF-assemblin (284 aa).

Residues 1–30 are disordered; sequence PTPSPEARVASRPFLDSPLPGSPRSGSPTG. The interval 1-38 is nonhelical region; it reads PTPSPEARVASRPFLDSPLPGSPRSGSPTGYITATKAI. Over residues 17-30 the composition is skewed to low complexity; sequence SPLPGSPRSGSPTG. Positions 39 to 284 are rod; that stretch reads SAGKLEHVAE…QDGLRIVNNS (246 aa). 2 coiled-coil regions span residues 56 to 102 and 239 to 268; these read EIEL…QIQV and LDEINNLKSAVQMEREERISEDDEIVQAVN.

The protein belongs to the SF-assemblin family. Post-translationally, consists of at least four isoforms including two phosphorylated.

Its subcellular location is the cytoplasm. The protein localises to the cytoskeleton. Major component of the striated microtubule-associated fibers (SMAFs; system-I-fibers). This chain is SF-assemblin, found in Spermatozopsis similis (Green alga).